Consider the following 97-residue polypeptide: Co-chaperonin GroES (97 aa).

It belongs to the GroES chaperonin family. Heptamer of 7 subunits arranged in a ring. Interacts with the chaperonin GroEL.

The protein localises to the cytoplasm. Together with the chaperonin GroEL, plays an essential role in assisting protein folding. The GroEL-GroES system forms a nano-cage that allows encapsulation of the non-native substrate proteins and provides a physical environment optimized to promote and accelerate protein folding. GroES binds to the apical surface of the GroEL ring, thereby capping the opening of the GroEL channel. The chain is Co-chaperonin GroES from Pseudomonas fluorescens (strain Pf0-1).